A 1116-amino-acid chain; its full sequence is Ubiquitin C-terminal hydrolase 12 (1116 aa).

Over residues 1 to 10 the composition is skewed to pro residues; that stretch reads MTMMTPPPVD. The tract at residues 1 to 52 is disordered; the sequence is MTMMTPPPVDQPEDEEMLVPNSDLVDGPAQPMEVTQPETAASTVENQPAEDP. The span at 36 to 46 shows a compositional bias: polar residues; sequence QPETAASTVEN. The region spanning 54 to 179 is the MATH domain; it reads TLKFTWTIPN…NDTVLVEAEV (126 aa). In terms of domain architecture, USP spans 199–524; it reads VGLKNQGATC…NAYMLVYIRE (326 aa). Cysteine 208 serves as the catalytic Nucleophile. Histidine 455 serves as the catalytic Proton acceptor.

The protein belongs to the peptidase C19 family. In terms of assembly, interacts with SIC/RON3.

The catalysed reaction is Thiol-dependent hydrolysis of ester, thioester, amide, peptide and isopeptide bonds formed by the C-terminal Gly of ubiquitin (a 76-residue protein attached to proteins as an intracellular targeting signal).. Its function is as follows. Recognizes and hydrolyzes the peptide bond at the C-terminal Gly of ubiquitin. Involved in the processing of poly-ubiquitin precursors as well as that of ubiquitinated proteins. Positive regulator of root meristem development that, together with UBP13, prevents the ubiquitination and turnover of RGFR1 induced by the RGF1 hormone peptide, thus influencing PLT1 and PLT2 expression. The chain is Ubiquitin C-terminal hydrolase 12 from Arabidopsis thaliana (Mouse-ear cress).